Consider the following 508-residue polypeptide: Bestrophin-2 (508 aa).

At 1-31 (MTVTYTARVANARFGGFSQLLLLWRGSIYKL) the chain is on the cytoplasmic side. Ca(2+) is bound at residue Ala-10. The chain crosses the membrane as a helical span at residues 32 to 51 (LWRELLCFLGLYMALSAAYR). Topologically, residues 52–60 (FLLAEEQKR) are extracellular. A helical membrane pass occupies residues 61–82 (YFEKLVIYCDQYASLIPVSFVL). At 83–238 (GFYVTLVVHR…WISIPLVYTQ (156 aa)) the chain is on the cytoplasmic side. The helical transmembrane segment at 239 to 255 (VVTIAVYSYFLACLIGR) threads the bilayer. The Extracellular segment spans residues 256–274 (QFLDPAQGYKDHTLDLCVP). A helical membrane pass occupies residues 275-288 (IFTLLQFFFYAGWL). The Cytoplasmic segment spans residues 289 to 508 (KVAEQLINPF…PIGEEEESPA (220 aa)). Ca(2+)-binding residues include Gln-293, Asn-296, Asp-301, and Asp-304. The interval 455–508 (LREPELEPPACPEPPAPIPGPTPEPFTTVSIPGPRAPAPPWLPSPIGEEEESPA) is disordered. 2 stretches are compositionally biased toward pro residues: residues 461-478 (EPPACPEPPAPIPGPTPE) and 488-497 (PRAPAPPWLP).

Belongs to the anion channel-forming bestrophin (TC 1.A.46) family. Calcium-sensitive chloride channel subfamily. As to quaternary structure, pentamer. Interacts with GLUL; this interaction tethers a fraction of GLUL to the membrane, causing a decrease of cytosolic glutamine synthase (GS) activity and inhibits the chloride channel activity of BEST2 by affecting the gating at the aperture in the absence of intracellular glutamate. Expressed in mucin-secreting colonic goblet cells.

The protein localises to the cell membrane. Its subcellular location is the basolateral cell membrane. It carries out the reaction chloride(in) = chloride(out). The catalysed reaction is hydrogencarbonate(in) = hydrogencarbonate(out). The enzyme catalyses L-glutamate(out) = L-glutamate(in). It catalyses the reaction iodide(out) = iodide(in). It carries out the reaction L-glutamine(out) = L-glutamine(in). With respect to regulation, chloride channel activity is allosterically inhibited by GLUL/glutamine synthase (GS) which affects the gating at the aperture in the absence of intracellular glutamate. Inhibitory effect of GLUL is relieved upon increasing of intracellular level of L-glutamate. Ligand-gated anion channel that allows the movement of anions across cell membranes when activated by calcium (Ca2+). Transports a large specter of anions, namely mediates the movement of chloride, L-glutamate and iodide. Calcium-binding triggers the dilation of the aperture, but calcium-dependent gating is only effective when the size of the passing anion is bigger than the closed aperture. Mediates the calcium-activated hydrogencarbonate movement and participates in colonic hydrogencarbonate secretion concomitant with mucin secretion. In non-pigmented epithelium (NPE), mediates the efflux of intracellular L-glutamate; binding of intracellular L-glutamate activates and open both the neck and the aperture of the channel, leading to L-glutamate exit promoting chloride influx movement from the extracellular side in trans. Also exhibits a directional permeability for intracellular glutamine, in a similar manner as for L-glutamate. This is Bestrophin-2 from Mus musculus (Mouse).